The sequence spans 882 residues: Piwi-like protein 3 (882 aa).

A compositionally biased stretch (basic residues) spans 1-15 (MPGRARTRARGRARR). Positions 1–91 (MPGRARTRAR…EAGLHTAPLQ (91 aa)) are disordered. The segment covering 32 to 46 (SATTQEPPQLQSTPR) has biased composition (polar residues). In terms of domain architecture, PAZ spans 293 to 406 (TAYDFIKRTS…LIPQLCHMTG (114 aa)). Positions 578 to 868 (KVICILPNDD…LAYLVGQSIH (291 aa)) constitute a Piwi domain.

Belongs to the argonaute family. Piwi subfamily. In terms of tissue distribution, expressed in testis.

Its subcellular location is the cytoplasm. In terms of biological role, may play a role during spermatogenesis by repressing transposable elements and preventing their mobilization, which is essential for the germline integrity. Acts via the piRNA metabolic process, which mediates the repression of transposable elements during meiosis by forming complexes composed of piRNAs and Piwi proteins and govern the methylation and subsequent repression of transposons. Directly binds piRNAs, a class of 24 to 30 nucleotide RNAs that are generated by a Dicer-independent mechanism and are primarily derived from transposons and other repeated sequence elements. Besides their function in transposable elements repression, piRNAs are probably involved in other processes during meiosis such as translation regulation. This Homo sapiens (Human) protein is Piwi-like protein 3 (PIWIL3).